The chain runs to 124 residues: UPF0102 protein Haur_0145 (124 aa).

This sequence belongs to the UPF0102 family.

This chain is UPF0102 protein Haur_0145, found in Herpetosiphon aurantiacus (strain ATCC 23779 / DSM 785 / 114-95).